A 457-amino-acid polypeptide reads, in one-letter code: MELSTVLLLLGLCSAGLVLGSEHETRLVAKLFEDYSSVVRPVEDHREIVQVTVGLQLIQLINVDEVNQIVTTNVRLKQQWVDYNLKWNPDDYGGVKKIHIPSEKIWRPDVVLYNNADGDFAIVKFTKVLLDYTGHITWTPPAIFKSYCEIIVTHFPFDEQNCSMKLGTWTYDGSVVAINPESDQPDLSNFMESGEWVIKEARGWKHWVFYSCCPTTPYLDITYHFVMQRLPLYFIVNVIIPCLLFSFLTSLVFYLPTDSGEKMTLSISVLLSLTVFLLVIVELIPSTSSAVPLIGKYMLFTMVFVIASIIITVIVINTHHRSPSTHIMPEWVRKVFIDTIPNIMFFSTMKRPSRDKQEKRIFTEDIDISDISGKPGPPPMGFHSPLIKHPEVKSAIEGVKYIAETMKSDQESNNAAEEWKYVAMVMDHILLGVFMLVCLIGTLAVFAGRLIELHQQG.

A signal peptide spans 1–20 (MELSTVLLLLGLCSAGLVLG). The Extracellular segment spans residues 21–230 (SEHETRLVAK…ITYHFVMQRL (210 aa)). Cystine bridges form between Cys-148–Cys-162 and Cys-212–Cys-213. A glycan (N-linked (GlcNAc...) asparagine) is linked at Asn-161. 3 consecutive transmembrane segments (helical) span residues 231–255 (PLYF…VFYL), 263–281 (MTLS…LVIV), and 297–316 (YMLF…VIVI). At 317 to 428 (NTHHRSPSTH…WKYVAMVMDH (112 aa)) the chain is on the cytoplasmic side. Residues 429 to 447 (ILLGVFMLVCLIGTLAVFA) traverse the membrane as a helical segment.

It belongs to the ligand-gated ion channel (TC 1.A.9) family. Acetylcholine receptor (TC 1.A.9.1) subfamily. Alpha-1/CHRNA1 sub-subfamily. As to quaternary structure, one of the alpha chains that assemble within the acetylcholine receptor, a pentamer of two alpha chains, a beta, a delta, and a gamma (in immature muscle) or epsilon (in mature muscle) chains. The muscle heteropentamer composed of alpha-1, beta-1, delta, epsilon subunits interacts with the alpha-conotoxin ImII.

It localises to the postsynaptic cell membrane. Its subcellular location is the cell membrane. The enzyme catalyses K(+)(in) = K(+)(out). It catalyses the reaction Na(+)(in) = Na(+)(out). Functionally, upon acetylcholine binding, the AChR responds by an extensive change in conformation that affects all subunits and leads to opening of an ion-conducting channel across the plasma membrane. The sequence is that of Acetylcholine receptor subunit alpha (Chrna1) from Mus musculus (Mouse).